The chain runs to 87 residues: Elongation factor Ts, chloroplastic (87 aa).

The protein belongs to the EF-Ts family.

The protein resides in the plastid. It is found in the chloroplast. Functionally, associates with the EF-Tu.GDP complex and induces the exchange of GDP to GTP. It remains bound to the aminoacyl-tRNA.EF-Tu.GTP complex up to the GTP hydrolysis stage on the ribosome. The polypeptide is Elongation factor Ts, chloroplastic (tsf) (Antithamnion sp. (Red alga)).